The chain runs to 351 residues: F-box protein At1g70590 (351 aa).

Residues 1-60 are disordered; the sequence is MKQRTWPCRSEGSRFSSLSFLKPHDKDKRSRISSINKATAKSTTSSRSSSSSSSSRPPSN. Polar residues predominate over residues 32-41; that stretch reads ISSINKATAK. Residues 42-59 are compositionally biased toward low complexity; the sequence is STTSSRSSSSSSSSRPPS. Residues 62–111 enclose the F-box domain; it reads FGDFSMLPYDILMKIAAPFSHPNLQAASLVCKSWRDALKPLRESMLLIRW. Residues 105–141 form a Sel1-like repeat; sequence SMLLIRWGKKYKHGRGGVRANLDKALDSFLKGAMRGS. A TPR repeat occupies 142–175; it reads TLAMVDAGLVYWERGEKEKAVNLYRRASELGDAV.

This chain is F-box protein At1g70590, found in Arabidopsis thaliana (Mouse-ear cress).